The following is a 436-amino-acid chain: Serine--tRNA ligase (436 aa).

Thr239 to Glu241 lines the L-serine pocket. Arg270 to Glu272 contributes to the ATP binding site. Residue Glu293 coordinates L-serine. An ATP-binding site is contributed by Glu357–Ser360. An L-serine-binding site is contributed by Ser393.

It belongs to the class-II aminoacyl-tRNA synthetase family. Type-1 seryl-tRNA synthetase subfamily. Homodimer. The tRNA molecule binds across the dimer.

It is found in the cytoplasm. The enzyme catalyses tRNA(Ser) + L-serine + ATP = L-seryl-tRNA(Ser) + AMP + diphosphate + H(+). The catalysed reaction is tRNA(Sec) + L-serine + ATP = L-seryl-tRNA(Sec) + AMP + diphosphate + H(+). The protein operates within aminoacyl-tRNA biosynthesis; selenocysteinyl-tRNA(Sec) biosynthesis; L-seryl-tRNA(Sec) from L-serine and tRNA(Sec): step 1/1. Catalyzes the attachment of serine to tRNA(Ser). Is also able to aminoacylate tRNA(Sec) with serine, to form the misacylated tRNA L-seryl-tRNA(Sec), which will be further converted into selenocysteinyl-tRNA(Sec). The chain is Serine--tRNA ligase from Blochmanniella floridana.